Reading from the N-terminus, the 347-residue chain is tRNA(Ile)-lysidine synthase (347 aa).

27–32 (SGGADS) provides a ligand contact to ATP. The tract at residues 243–263 (AAPASPSHVEGEASAPHDAAH) is disordered.

It belongs to the tRNA(Ile)-lysidine synthase family.

The protein localises to the cytoplasm. The enzyme catalyses cytidine(34) in tRNA(Ile2) + L-lysine + ATP = lysidine(34) in tRNA(Ile2) + AMP + diphosphate + H(+). Ligates lysine onto the cytidine present at position 34 of the AUA codon-specific tRNA(Ile) that contains the anticodon CAU, in an ATP-dependent manner. Cytidine is converted to lysidine, thus changing the amino acid specificity of the tRNA from methionine to isoleucine. This is tRNA(Ile)-lysidine synthase from Nitratidesulfovibrio vulgaris (strain ATCC 29579 / DSM 644 / CCUG 34227 / NCIMB 8303 / VKM B-1760 / Hildenborough) (Desulfovibrio vulgaris).